The following is an 82-amino-acid chain: Large ribosomal subunit protein bL31B (82 aa).

It belongs to the bacterial ribosomal protein bL31 family. Type B subfamily. As to quaternary structure, part of the 50S ribosomal subunit.

This chain is Large ribosomal subunit protein bL31B, found in Amoebophilus asiaticus (strain 5a2).